A 567-amino-acid chain; its full sequence is Arginine--tRNA ligase (567 aa).

The 'HIGH' region signature appears at 128–138 (ANPTGPLHVGH).

The protein belongs to the class-I aminoacyl-tRNA synthetase family. As to quaternary structure, monomer.

The protein resides in the cytoplasm. The enzyme catalyses tRNA(Arg) + L-arginine + ATP = L-arginyl-tRNA(Arg) + AMP + diphosphate. The protein is Arginine--tRNA ligase of Acidovorax ebreus (strain TPSY) (Diaphorobacter sp. (strain TPSY)).